We begin with the raw amino-acid sequence, 258 residues long: 3-deoxy-manno-octulosonate cytidylyltransferase (258 aa).

Belongs to the KdsB family.

The protein localises to the cytoplasm. It carries out the reaction 3-deoxy-alpha-D-manno-oct-2-ulosonate + CTP = CMP-3-deoxy-beta-D-manno-octulosonate + diphosphate. Its pathway is nucleotide-sugar biosynthesis; CMP-3-deoxy-D-manno-octulosonate biosynthesis; CMP-3-deoxy-D-manno-octulosonate from 3-deoxy-D-manno-octulosonate and CTP: step 1/1. It participates in bacterial outer membrane biogenesis; lipopolysaccharide biosynthesis. In terms of biological role, activates KDO (a required 8-carbon sugar) for incorporation into bacterial lipopolysaccharide in Gram-negative bacteria. This Gemmatimonas aurantiaca (strain DSM 14586 / JCM 11422 / NBRC 100505 / T-27) protein is 3-deoxy-manno-octulosonate cytidylyltransferase.